The chain runs to 1802 residues: MATPVRDETRNVIDDNISARIQSKVKTNDTVRQTPSSLRKVSIKDEQVKQYQRNLNRFKTILNGLKAEEEKLSETDDIQMLAEKLLKLGETIDKVENRIVDLVEKIQLLETNENNNILHEHIDATGTYYLFDTLTSTNKRFYPKDCVFDYRTNNVENIPILLNNFKKFIKKYQFDDVFENDIIEIDPRENEILCKIIKEGLGESLDIMNTNTTDIFRIIDGLKNKYRSLHGRDVRIRAWEKVLVDTTCRNSALLMNKLQKLVLMEKWIFSKCCQDCPNLKDYLQEAIMGTLHESLRNSVKQRLYNIPHNVGINHEEFLINTVIETVIDLSPIADDQIENSCMYCKSVFHCSINCKKKPNRELGLTRPISQKPIIYKVHRDNNNLSPVQNEQKSWNKTQKKSNKVYNSKKLVIIDTGSGVNITNDKTLLHNYEDSNRSTRFFGIGKNSSVSVKGYGYIKIKNGHNNTDNKCLLTYYVPEEESTIISCYDLAKKTKMVLSRKYTRLGNKIIKIKTKIVNGVIHVKMNELIERPSDDSKINAIKPTSSPGFKLNKRSITLEDAHKRMGHTGIQQIENSIKHNHYEESLDLIKEPNEFWCQTCKISKATKRNHYTGSMNNHSTDHEPGSSWCMDIFGPVSSSNADTKRYMLIMVDNNTRYCMTSTHFNKNAETILAQIRKNIQYVETQFDRKVREINSDRGTEFTNDQIEEYFISKGIHHILTSTQDHAANGRAERYIRTIVTDATTLLRQSNLRVKFWEYAVTSATNIRNCLEHKSTGKLPLKAISRQPVTVRLMSFLPFGEKGIIWNHNHKKLKPSGLPSIILCKDPNSYGYKFFIPSKNKIVTSDNYTIPNYTMDGRVRNTQNIYKSHQFSSHNDNEEDQIETVTNLCEALENYEDDNKPITRLEDLFTEEELSQIDSNAKYPSPSNNLEGDLDYVFSDVEESGDYDVESELSTTNTSISTDKNKILSNKDFNSELASTEISISEIDKKGLINTSHIDEDKYDEKVHRIPSIIQEKLVGSKNTIKINDENRISDRIRSKNIGSILNTGLSRCVDITDESITNKDESMHNAKPELIQEQFNKTNHETSFPKEGSIGTNVKFRNTDNEISLKTGDTSLPIKTLESINNHHSNDYSTNKVEKFEKENHHPPPIEDIVDMSDQTDMESNCQDGNNLKELKVTDKNVPTDNGTNVSPRLEQNIEASGSPVQTVNKSAFLNKEFSSLNMKRKRKRHDKNNSLTSYELERDKKRSKRNRVKLIPDNMETVSAQKIRAIYYNEAISKNPDLKEKHEYKQAYHKELQNLKDMKVFDVDVKYSRSEIPDNLIVPTNTIFTKKRNGIYKARIVCRGDTQSPDTYSVITTESLNHNHIKIFLMIANNRNMFMKTLDINHAFLYAKLEEEIYIPHPHDRRCVVKLNKALYGLKQSPKEWNDHLRQYLNGIGLKDNSYTPGLYQTEDKNLMIAVYVDDCVIAASNEQRLDEFINKLKSNFELKITGTLIDDVLDTDILGMDLVYNKRLGTIDLTLKSFINRMDKKYNEELKKIRKSSIPHMSTYKIDPKKDVLQMSEEEFRQGVLKLQQLLGELNYVRHKCRYDINFAVKKVARLVNYPHERVFYMIYKIIQYLVRYKDIGIHYDRDCNKDKKVIAITDASVGSEYDAQSRIGVILWYGMNIFNVYSNKSTNRCVSSTEAELHAIYEGYADSETLKVTLKELGEGDNNDIVMITDSKPAIQGLNRSYQQPKEKFTWIKTEIIKEKIKEKSIKLLKITGKGNIADLLTKPVSASDFKRFIQVLKNKITSQDILASTDY.

Residues 39 to 115 are a coiled coil; it reads RKVSIKDEQV…IQLLETNENN (77 aa). The tract at residues 381-501 is ty4 protease; the sequence is NNNLSPVQNE…KTKMVLSRKY (121 aa). D414 serves as the catalytic For protease activity; shared with dimeric partner. The tract at residues 539–599 is integrase-type zinc finger-like; that stretch reads AIKPTSSPGF…EPNEFWCQTC (61 aa). In terms of domain architecture, Integrase catalytic spans 619-786; that stretch reads TDHEPGSSWC…LPLKAISRQP (168 aa). Positions 630 and 695 each coordinate Mg(2+). The tract at residues 1223–1248 is disordered; sequence KRKRKRHDKNNSLTSYELERDKKRSK. Residues 1375-1510 form the Reverse transcriptase Ty1/copia-type domain; it reads RNMFMKTLDI…DILGMDLVYN (136 aa). 6 residues coordinate Mg(2+): D1383, D1462, D1463, D1644, E1686, and D1720. An RNase H Ty1/copia-type domain is found at 1644–1790; it reads DASVGSEYDA…KRFIQVLKNK (147 aa).

As to quaternary structure, the protease is a homodimer, whose active site consists of two apposed aspartic acid residues. In terms of processing, proteolytically processed into capsid protein (CA), Ty4 protease (PR), integrase (IN) and reverse transcriptase/ribonuclease H (RT) proteins. Initially, virus-like particles (VLPs) are composed of the structural unprocessed proteins Gag and Gag-Pol, and also contain the host initiator methionine tRNA (tRNA(i)-Met) which serves as a primer for minus-strand DNA synthesis, and a dimer of genomic Ty RNA. Processing of the polyproteins occurs within the particle and proceeds by an ordered pathway, called maturation. First, the protease (PR) is released by autocatalytic cleavage of the Gag-Pol polyprotein, and this cleavage is a prerequisite for subsequent processing at the remaining sites to release the mature structural and catalytic proteins. Maturation takes place prior to the RT reaction and is required to produce transposition-competent VLPs.

Its subcellular location is the cytoplasm. It is found in the nucleus. The enzyme catalyses DNA(n) + a 2'-deoxyribonucleoside 5'-triphosphate = DNA(n+1) + diphosphate. It catalyses the reaction Endonucleolytic cleavage to 5'-phosphomonoester.. Capsid protein (CA) is the structural component of the virus-like particle (VLP), forming the shell that encapsulates the retrotransposons dimeric RNA genome. Its function is as follows. The aspartyl protease (PR) mediates the proteolytic cleavages of the Gag and Gag-Pol polyproteins after assembly of the VLP. In terms of biological role, reverse transcriptase/ribonuclease H (RT) is a multifunctional enzyme that catalyzes the conversion of the retro-elements RNA genome into dsDNA within the VLP. The enzyme displays a DNA polymerase activity that can copy either DNA or RNA templates, and a ribonuclease H (RNase H) activity that cleaves the RNA strand of RNA-DNA heteroduplexes during plus-strand synthesis and hydrolyzes RNA primers. The conversion leads to a linear dsDNA copy of the retrotransposon that includes long terminal repeats (LTRs) at both ends. Functionally, integrase (IN) targets the VLP to the nucleus, where a subparticle preintegration complex (PIC) containing at least integrase and the newly synthesized dsDNA copy of the retrotransposon must transit the nuclear membrane. Once in the nucleus, integrase performs the integration of the dsDNA into the host genome. In Saccharomyces cerevisiae (strain ATCC 204508 / S288c) (Baker's yeast), this protein is Transposon Ty4-H Gag-Pol polyprotein (TY4B-H).